Reading from the N-terminus, the 552-residue chain is Arginine--tRNA ligase (552 aa).

The 'HIGH' region motif lies at 130–140 (ANPTGPLSIGH).

This sequence belongs to the class-I aminoacyl-tRNA synthetase family. Monomer.

It localises to the cytoplasm. It catalyses the reaction tRNA(Arg) + L-arginine + ATP = L-arginyl-tRNA(Arg) + AMP + diphosphate. The polypeptide is Arginine--tRNA ligase (Desulfotalea psychrophila (strain LSv54 / DSM 12343)).